The chain runs to 407 residues: Betaine--homocysteine S-methyltransferase 1 (407 aa).

Residues 11-314 enclose the Hcy-binding domain; the sequence is KGILERLNSG…YHIRAIAEEL (304 aa). Residues lysine 40, lysine 93, and lysine 98 each carry the N6-succinyllysine modification. Cysteine 217 is a Zn(2+) binding site. An N6-succinyllysine mark is found at lysine 232 and lysine 241. Zn(2+) contacts are provided by cysteine 299 and cysteine 300. At serine 330 the chain carries Phosphoserine. An N6-succinyllysine mark is found at lysine 340 and lysine 377.

Homotetramer. The cofactor is Zn(2+).

It is found in the cytoplasm. It localises to the cytosol. The protein localises to the nucleus. The enzyme catalyses L-homocysteine + glycine betaine = N,N-dimethylglycine + L-methionine. Its pathway is amine and polyamine degradation; betaine degradation; sarcosine from betaine: step 1/2. It functions in the pathway amino-acid biosynthesis; L-methionine biosynthesis via de novo pathway; L-methionine from L-homocysteine (BhmT route): step 1/1. Involved in the regulation of homocysteine metabolism. Converts betaine and homocysteine to dimethylglycine and methionine, respectively. This reaction is also required for the irreversible oxidation of choline. This is Betaine--homocysteine S-methyltransferase 1 (BHMT) from Bos taurus (Bovine).